Here is a 130-residue protein sequence, read N- to C-terminus: Bet1-like SNARE 1-2 (130 aa).

The Cytoplasmic portion of the chain corresponds to 1–106 (MNFRRENRAS…EKKSNRKSCK (106 aa)). Residues 33-95 (AHDERDNDEA…SGTINRFKLV (63 aa)) enclose the t-SNARE coiled-coil homology domain. A coiled-coil region spans residues 40–82 (DEALENLQDRVSFLKRVTGDIHEEVENHNRLLDKVGNKMDSAR). Residues 107–122 (LIAYFVLLFLIMYYLI) form a helical; Anchor for type IV membrane protein membrane-spanning segment. At 123–130 (RLLNYIKG) the chain is on the vesicular side.

This sequence belongs to the BET1 family.

The protein resides in the golgi apparatus membrane. Its subcellular location is the endoplasmic reticulum membrane. Required for vesicular transport from the ER to the Golgi complex. Functions as a SNARE associated with ER-derived vesicles. The chain is Bet1-like SNARE 1-2 (BET12) from Arabidopsis thaliana (Mouse-ear cress).